The chain runs to 226 residues: ATP-dependent dethiobiotin synthetase BioD (226 aa).

12-17 serves as a coordination point for ATP; it reads GVGKTV. Residue Thr-16 coordinates Mg(2+). Residue Lys-37 is part of the active site. A substrate-binding site is contributed by Thr-41. ATP-binding positions include Asp-49, 108–111, and 197–199; these read EGAG and PAG. Positions 49 and 108 each coordinate Mg(2+).

The protein belongs to the dethiobiotin synthetase family. As to quaternary structure, homodimer. Requires Mg(2+) as cofactor.

The protein resides in the cytoplasm. It carries out the reaction (7R,8S)-7,8-diammoniononanoate + CO2 + ATP = (4R,5S)-dethiobiotin + ADP + phosphate + 3 H(+). Its pathway is cofactor biosynthesis; biotin biosynthesis; biotin from 7,8-diaminononanoate: step 1/2. In terms of biological role, catalyzes a mechanistically unusual reaction, the ATP-dependent insertion of CO2 between the N7 and N8 nitrogen atoms of 7,8-diaminopelargonic acid (DAPA, also called 7,8-diammoniononanoate) to form a ureido ring. The sequence is that of ATP-dependent dethiobiotin synthetase BioD from Mycobacterium avium (strain 104).